The following is a 362-amino-acid chain: Phosphoglycolate phosphatase 1B, chloroplastic (362 aa).

The N-terminal 54 residues, 1–54, are a transit peptide targeting the chloroplast; sequence MLSRSVASAVTPVSSSSLLPNSKPIFCLKTLSGYRSSSFCGGCIRKINHKPLRM. An N-acetylthreonine modification is found at threonine 55. Glutamate 80 functions as the Nucleophile in the catalytic mechanism. Serine 356 carries the phosphoserine modification.

It belongs to the HAD-like hydrolase superfamily. CbbY/CbbZ/Gph/YieH family.

It localises to the plastid. Its subcellular location is the chloroplast. The catalysed reaction is 2-phosphoglycolate + H2O = glycolate + phosphate. In terms of biological role, photorespiratory enzyme that dephosphorylates the 2-phosphoglycolate produced by the RuBisCO oxygenation reaction. This is Phosphoglycolate phosphatase 1B, chloroplastic (PGLP1B) from Arabidopsis thaliana (Mouse-ear cress).